The chain runs to 136 residues: Large ribosomal subunit protein bL21 (136 aa).

The protein belongs to the bacterial ribosomal protein bL21 family. As to quaternary structure, part of the 50S ribosomal subunit. Contacts protein L20.

Its function is as follows. This protein binds to 23S rRNA in the presence of protein L20. The protein is Large ribosomal subunit protein bL21 of Trichodesmium erythraeum (strain IMS101).